Consider the following 694-residue polypeptide: Cyclic nucleotide-gated ion channel 4 (694 aa).

The segment covering 1–15 (MATEQEFTRASRFSR) has biased composition (basic and acidic residues). A disordered region spans residues 1 to 64 (MATEQEFTRA…RIGLTCGGRR (64 aa)). The Cytoplasmic portion of the chain corresponds to 1-92 (MATEQEFTRA…RSKWVREWNK (92 aa)). Acidic residues predominate over residues 24 to 53 (SEEDNTEEEDEEEEEMEEIEEEEEEEEEED). Residues 93-113 (VFLLVCATGLFVDPLFLYTLS) form a helical membrane-spanning segment. Topologically, residues 114–126 (VSDTCMCLLVDGW) are extracellular. A helical membrane pass occupies residues 127–147 (LALTVTALRSMTDLLHLWNIW). At 148 to 187 (IQFKIARRWPYPGGDSDGDTNKGGGTRGSTRVAPPYVKKN) the chain is on the cytoplasmic side. Residues 188–208 (GFFFDLFVILPLPQVVLWVVI) traverse the membrane as a helical segment. Residues 209-216 (PSLLKRGS) lie on the Extracellular side of the membrane. A helical transmembrane segment spans residues 217–237 (VTLVVSVLLVTFLFQYLPKIY). Over 238–251 (HSIRHLRRNATLSG) the chain is Cytoplasmic. A helical membrane pass occupies residues 252–272 (YIFGTVWWGIALNMIAYFVAA). Topologically, residues 273-392 (HAAGACWYLL…LESTTEWSEV (120 aa)) are extracellular. Residues 393-413 (VFNIIVLTSGLLLVTMLIGNI) traverse the membrane as a helical segment. The Cytoplasmic portion of the chain corresponds to 414 to 694 (KVFLHATTSK…KPNPDDFDDY (281 aa)). Residues 496-626 (LFQH…ARYY) and aspartate 565 contribute to the a nucleoside 3',5'-cyclic phosphate site. Positions 610-626 (FRYTFVNEKVKRSARYY) are calmodulin-binding. An IQ domain is found at 631–660 (RTWAAVAVQLAWRRYKHRLTLTSLSFIRPR).

Belongs to the cyclic nucleotide-gated cation channel (TC 1.A.1.5) family. In terms of assembly, homotetramer or heterotetramer.

The protein localises to the cell membrane. In terms of biological role, acts as a cyclic nucleotide-gated ion channel. Permeable to potassium and sodium in a cyclic nucleotide-dependent fashion (cAMP or cGMP). Might constitute a common downstream component of the signaling pathways leading to hypersensitive response (HR). This is Cyclic nucleotide-gated ion channel 4 (CNGC4) from Arabidopsis thaliana (Mouse-ear cress).